We begin with the raw amino-acid sequence, 351 residues long: DNA polymerase IV (351 aa).

A UmuC domain is found at 4-185; sequence IIHVDMDCFF…LPLAKIPGVG (182 aa). Positions 8 and 103 each coordinate Mg(2+). E104 is a catalytic residue.

It belongs to the DNA polymerase type-Y family. As to quaternary structure, monomer. Mg(2+) serves as cofactor.

It localises to the cytoplasm. The enzyme catalyses DNA(n) + a 2'-deoxyribonucleoside 5'-triphosphate = DNA(n+1) + diphosphate. Functionally, poorly processive, error-prone DNA polymerase involved in untargeted mutagenesis. Copies undamaged DNA at stalled replication forks, which arise in vivo from mismatched or misaligned primer ends. These misaligned primers can be extended by PolIV. Exhibits no 3'-5' exonuclease (proofreading) activity. May be involved in translesional synthesis, in conjunction with the beta clamp from PolIII. This Escherichia coli O1:K1 / APEC protein is DNA polymerase IV.